We begin with the raw amino-acid sequence, 194 residues long: Molybdenum cofactor guanylyltransferase (194 aa).

GTP contacts are provided by residues 12-14 (LAG), Lys25, Asn53, Asp70, and Asp100. Residue Asp100 coordinates Mg(2+).

This sequence belongs to the MobA family. Monomer. Requires Mg(2+) as cofactor.

Its subcellular location is the cytoplasm. It carries out the reaction Mo-molybdopterin + GTP + H(+) = Mo-molybdopterin guanine dinucleotide + diphosphate. Its function is as follows. Transfers a GMP moiety from GTP to Mo-molybdopterin (Mo-MPT) cofactor (Moco or molybdenum cofactor) to form Mo-molybdopterin guanine dinucleotide (Mo-MGD) cofactor. This Aliivibrio fischeri (strain ATCC 700601 / ES114) (Vibrio fischeri) protein is Molybdenum cofactor guanylyltransferase.